The following is an 824-amino-acid chain: Leucine--tRNA ligase (824 aa).

Residues 41–51 (PYPSGTLHVGH) carry the 'HIGH' region motif. Positions 580-584 (KMSKS) match the 'KMSKS' region motif. Position 583 (Lys583) interacts with ATP.

It belongs to the class-I aminoacyl-tRNA synthetase family.

It localises to the cytoplasm. The enzyme catalyses tRNA(Leu) + L-leucine + ATP = L-leucyl-tRNA(Leu) + AMP + diphosphate. In Thermotoga petrophila (strain ATCC BAA-488 / DSM 13995 / JCM 10881 / RKU-1), this protein is Leucine--tRNA ligase.